Here is a 262-residue protein sequence, read N- to C-terminus: Phosphate import ATP-binding protein PstB (262 aa).

The region spanning 16-257 (MEARHLSVRY…PSEQRTEDYV (242 aa)) is the ABC transporter domain. An ATP-binding site is contributed by 48–55 (GPSGCGKS).

The protein belongs to the ABC transporter superfamily. Phosphate importer (TC 3.A.1.7) family. As to quaternary structure, the complex is composed of two ATP-binding proteins (PstB), two transmembrane proteins (PstC and PstA) and a solute-binding protein (PstS).

Its subcellular location is the cell inner membrane. It catalyses the reaction phosphate(out) + ATP + H2O = ADP + 2 phosphate(in) + H(+). Its function is as follows. Part of the ABC transporter complex PstSACB involved in phosphate import. Responsible for energy coupling to the transport system. In Anaeromyxobacter dehalogenans (strain 2CP-C), this protein is Phosphate import ATP-binding protein PstB.